The chain runs to 365 residues: Peptide chain release factor 2 (365 aa).

Gln251 carries the N5-methylglutamine modification.

This sequence belongs to the prokaryotic/mitochondrial release factor family. In terms of processing, methylated by PrmC. Methylation increases the termination efficiency of RF2.

It is found in the cytoplasm. Functionally, peptide chain release factor 2 directs the termination of translation in response to the peptide chain termination codons UGA and UAA. In Campylobacter jejuni subsp. jejuni serotype O:23/36 (strain 81-176), this protein is Peptide chain release factor 2.